Here is a 62-residue protein sequence, read N- to C-terminus: Omega-lycotoxin-Am1e (62 aa).

The propeptide occupies 1 to 15; it reads EDEVEETLPVAEEGR. 4 disulfides stabilise this stretch: Cys19-Cys34, Cys26-Cys39, Cys33-Cys59, and Cys41-Cys57.

The protein belongs to the neurotoxin omega-lctx family. In terms of tissue distribution, expressed by the venom gland.

It is found in the secreted. In terms of biological role, modulates Cav2.1/CACNA1A voltage-gated calcium channels (P/Q-type currents) in rat cerebellar Purkinje cells and hippocampal CA1-CA3 neurons. At saturating concentrations (&gt;10 nM) decelerates activation kinetics and slightly increases peak amplitude without affecting deactivation kinetics. In vivo, does not cause death when intravenously injected into mice. In rat models, through its activity on Cav2.1/CACNA1A, has an ameliorative effect on memory defects provoked by hyperstimulation of N-methyl-D-aspartate receptors (NMDARs) in the hippocampus. This Alopecosa marikovskyi (Wolf spider) protein is Omega-lycotoxin-Am1e.